The sequence spans 311 residues: Dehydrogenase/reductase SDR family member 7C (311 aa).

The signal sequence occupies residues 1–18 (MGVTAVLMLPLLLLGISG). 5 residues coordinate NAD(+): Ser-47, Leu-49, Tyr-191, Lys-195, and Ser-226. Catalysis depends on Tyr-191, which acts as the Proton acceptor.

It belongs to the short-chain dehydrogenases/reductases (SDR) family.

It localises to the sarcoplasmic reticulum membrane. The enzyme catalyses all-trans-retinol + NAD(+) = all-trans-retinal + NADH + H(+). NADH-dependent oxidoreductase which catalyzes the oxidation of all-trans-retinol to all-trans-retinal. Plays a role in the regulation of cardiac and skeletal muscle metabolic functions. Maintains Ca(2+) intracellular homeostasis by repressing Ca(2+) release from the sarcoplasmic reticulum (SR) in myotubes, possibly through local alternations in NAD/NADH or retinol/retinal. Also plays a role in Ca(2+) homeostasis by controlling Ca(2+) overload in the cytosol and the SR in myotubes. Involved in glucose uptake into skeletal muscles and muscle performance by activating PI3K and mTORC2-mediated AKT1 phosphorylation signaling pathways, possibly through the action of its downstream catalytic product all-trans-retinoic acid. In Bos taurus (Bovine), this protein is Dehydrogenase/reductase SDR family member 7C (DHRS7C).